Here is a 175-residue protein sequence, read N- to C-terminus: Methylated-DNA--protein-cysteine methyltransferase (175 aa).

Y115 and R127 together coordinate DNA. Catalysis depends on C144, which acts as the Nucleophile; methyl group acceptor.

It belongs to the MGMT family.

It localises to the nucleus. It catalyses the reaction a 6-O-methyl-2'-deoxyguanosine in DNA + L-cysteinyl-[protein] = S-methyl-L-cysteinyl-[protein] + a 2'-deoxyguanosine in DNA. The enzyme catalyses a 4-O-methyl-thymidine in DNA + L-cysteinyl-[protein] = a thymidine in DNA + S-methyl-L-cysteinyl-[protein]. Functionally, involved in the cellular defense against the biological effects of O6-methylguanine (O6-MeG) and O4-methylthymine (O4-MeT) in DNA. Repairs the methylated nucleobase in DNA by stoichiometrically transferring the methyl group to a cysteine residue in the enzyme. This is a suicide reaction: the enzyme is irreversibly inactivated. The polypeptide is Methylated-DNA--protein-cysteine methyltransferase (MGT1) (Candida albicans (strain SC5314 / ATCC MYA-2876) (Yeast)).